Reading from the N-terminus, the 145-residue chain is 3-hydroxyacyl-[acyl-carrier-protein] dehydratase FabZ (145 aa).

His49 is an active-site residue.

This sequence belongs to the thioester dehydratase family. FabZ subfamily.

It is found in the cytoplasm. It catalyses the reaction a (3R)-hydroxyacyl-[ACP] = a (2E)-enoyl-[ACP] + H2O. In terms of biological role, involved in unsaturated fatty acids biosynthesis. Catalyzes the dehydration of short chain beta-hydroxyacyl-ACPs and long chain saturated and unsaturated beta-hydroxyacyl-ACPs. The protein is 3-hydroxyacyl-[acyl-carrier-protein] dehydratase FabZ of Rickettsia bellii (strain RML369-C).